We begin with the raw amino-acid sequence, 454 residues long: Chromosomal replication initiator protein DnaA (454 aa).

The domain I, interacts with DnaA modulators stretch occupies residues 1–76; sequence MNKLKTDLNL…IGASFRILAK (76 aa). Residues 76 to 113 form a domain II region; the sequence is KNPKIIFAQESPGNGEKATGKKIKSLPREDKSSIFESK. Positions 114 to 330 are domain III, AAA+ region; it reads GLNTKFSFEN…GALNRLCAYA (217 aa). ATP-binding residues include Gly158, Gly160, Lys161, and Thr162. The interval 331-454 is domain IV, binds dsDNA; the sequence is SIHKEGKITL…KITEQLTSSQ (124 aa).

This sequence belongs to the DnaA family. In terms of assembly, oligomerizes as a right-handed, spiral filament on DNA at oriC.

Its subcellular location is the cytoplasm. In terms of biological role, plays an essential role in the initiation and regulation of chromosomal replication. ATP-DnaA binds to the origin of replication (oriC) to initiate formation of the DNA replication initiation complex once per cell cycle. Binds the DnaA box (a 9 base pair repeat at the origin) and separates the double-stranded (ds)DNA. Forms a right-handed helical filament on oriC DNA; dsDNA binds to the exterior of the filament while single-stranded (ss)DNA is stabiized in the filament's interior. The ATP-DnaA-oriC complex binds and stabilizes one strand of the AT-rich DNA unwinding element (DUE), permitting loading of DNA polymerase. After initiation quickly degrades to an ADP-DnaA complex that is not apt for DNA replication. Binds acidic phospholipids. This is Chromosomal replication initiator protein DnaA from Methylacidiphilum infernorum (isolate V4) (Methylokorus infernorum (strain V4)).